A 412-amino-acid polypeptide reads, in one-letter code: Gamma-glutamyl phosphate reductase (412 aa).

Belongs to the gamma-glutamyl phosphate reductase family.

It is found in the cytoplasm. The catalysed reaction is L-glutamate 5-semialdehyde + phosphate + NADP(+) = L-glutamyl 5-phosphate + NADPH + H(+). The protein operates within amino-acid biosynthesis; L-proline biosynthesis; L-glutamate 5-semialdehyde from L-glutamate: step 2/2. Its function is as follows. Catalyzes the NADPH-dependent reduction of L-glutamate 5-phosphate into L-glutamate 5-semialdehyde and phosphate. The product spontaneously undergoes cyclization to form 1-pyrroline-5-carboxylate. This Actinobacillus pleuropneumoniae serotype 7 (strain AP76) protein is Gamma-glutamyl phosphate reductase.